The primary structure comprises 344 residues: MGCFSLLCLHNLKDWEGLEKIESDTEYFRVPGLFDKIELTKNQLGNAARPRNEEWRVMSEKMKKAEEEAYGMVVNTFEDLEKEYIEGLMNAKNKKIWTIGPVSLCNKEKQDKAERGNEAAIDEHKCLNWLDSWEQNSVLFVCLGSLSRLSTSQMVELGLGLESSRRPFIWVVRHMSDEFKNWLVEEDFEERVKGQGLLIRGWAPQVLLLSHPSIGAFLTHCGWNSSLEGITAGVAMITWPMFAEQFCNERLIVDVLKTGVRSGIERQVMFGEEEKLGTQVSKDDIKKVIEQVMDEEMEGEMRRKRAKELGEKAKRAMEEEGSSHFNLTQLIQDVTEQAKILKPM.

UDP-alpha-D-glucose-binding positions include S145, 202-203 (WA), 220-228 (HCGWNSSLE), and 242-245 (FAEQ).

The protein belongs to the UDP-glycosyltransferase family. As to expression, expressed in flowers and fruits.

Its subcellular location is the cytoplasm. The protein localises to the nucleus. Functionally, probable glucosyltransferase that cannot glycosylate abscisic acid (ABA) and auxin (IAA). The chain is UDP-glycosyltransferase 73C4 from Solanum lycopersicum (Tomato).